The sequence spans 1623 residues: ABC transporter C family member 2 (1623 aa).

9 consecutive transmembrane segments (helical) span residues 37–57 (FVLG…IWLA), 76–96 (FLAL…IMGI), 109–129 (FEAF…VMIL), 145–165 (FAVI…LSVK), 172–192 (VLYL…LLFM), 336–356 (AWMG…GVLC), 440–460 (VASL…TVII), 527–547 (FILN…FTLL), and 557–577 (FTSL…PNII). Residues 302 to 582 (FWWGGFWKIG…LPNIITQVVN (281 aa)) enclose the ABC transmembrane type-1 1 domain. The ABC transporter 1 domain maps to 614-838 (ISIRNGYFSW…GPLFQRLMEN (225 aa)). 649–656 (GSTGEGKT) lines the ATP pocket. A disordered region spans residues 842 to 890 (VEEYSEENGEAEADQTAEQPVANGNTNGLQMDGSDDKKSKEGNKKGGKS). The span at 845 to 856 (YSEENGEAEADQ) shows a compositional bias: acidic residues. Over residues 857–870 (TAEQPVANGNTNGL) the composition is skewed to polar residues. Over residues 875-885 (SDDKKSKEGNK) the composition is skewed to basic and acidic residues. The next 6 helical transmembrane spans lie at 914 to 934 (ALGG…TEVF), 955 to 975 (GPLF…LVTL), 1032 to 1054 (AVFV…LIGI), 1058 to 1077 (LSLW…YLYY), 1143 to 1163 (LGIR…SFAV), and 1177 to 1197 (STMG…TGVL). The ABC transmembrane type-1 2 domain occupies 921–1205 (VMMLLLCYVL…VLRLASLAEN (285 aa)). Positions 1236–1251 (WPSSGSIKFEDVVLRY) are interaction with calmodulin and FKP42/TWD1. The region spanning 1242-1476 (IKFEDVVLRY…EGSSFSKMVQ (235 aa)) is the ABC transporter 2 domain. 1276–1283 (GRTGAGKS) is a binding site for ATP.

It belongs to the ABC transporter superfamily. ABCC family. Conjugate transporter (TC 3.A.1.208) subfamily. As to quaternary structure, interacts with FKBP42/TWD1 and probably with calmodulin (CaM). As to expression, ubiquitous, at low levels.

It localises to the vacuole membrane. The catalysed reaction is ATP + H2O + xenobioticSide 1 = ADP + phosphate + xenobioticSide 2.. Its activity is regulated as follows. Reciprocal promotion of DNP-GS and E(2)17betaG uptake. E(2)17betaG uptake is also stimulated by GSH and S-methyl-glutathione (S-methyl-GS), and, to a lower extent, by GSSG and C3G-GS. Metolachlor-GS and decyl-GS slightly inhibit E(2)17betaG uptake. Pump for glutathione S-conjugates. Mediates the transport of S-conjugates such as GSH, S-(2,4-dinitrophenyl)-glutathione (DNP-GS), GSSG, cyanidin 3-glucoside-GS (C3G-GS) and metolachlor-GS (MOC-GS), glucuronides such as 17-beta-estradiol 17-(beta-D-glucuronide) (E(2)17betaG), and of the chlorophyll catabolite such as B.napus nonfluorescent chlorophyll catabolite (Bn-NCC-1). The polypeptide is ABC transporter C family member 2 (ABCC2) (Arabidopsis thaliana (Mouse-ear cress)).